A 397-amino-acid chain; its full sequence is Endoglucanase (397 aa).

Glu-194 serves as the catalytic Proton donor. Glu-317 acts as the Nucleophile in catalysis.

It belongs to the glycosyl hydrolase 5 (cellulase A) family.

It carries out the reaction Endohydrolysis of (1-&gt;4)-beta-D-glucosidic linkages in cellulose, lichenin and cereal beta-D-glucans.. In Paenibacillus polymyxa (Bacillus polymyxa), this protein is Endoglucanase.